Reading from the N-terminus, the 861-residue chain is Leucine--tRNA ligase (861 aa).

Residues 42–52 (PYPSGRLHMGH) carry the 'HIGH' region motif. The short motif at 619-623 (KMSKS) is the 'KMSKS' region element. Lys-622 is an ATP binding site.

Belongs to the class-I aminoacyl-tRNA synthetase family.

The protein resides in the cytoplasm. It catalyses the reaction tRNA(Leu) + L-leucine + ATP = L-leucyl-tRNA(Leu) + AMP + diphosphate. In Haemophilus influenzae (strain PittGG), this protein is Leucine--tRNA ligase.